The following is a 402-amino-acid chain: Flavohemoprotein (402 aa).

Positions 1-136 (MLSAKTIEIV…IADAFISIEA (136 aa)) constitute a Globin domain. A heme b-binding site is contributed by histidine 85. Catalysis depends on charge relay system residues tyrosine 95 and glutamate 135. Positions 147 to 402 (GGWKDFRNFV…EFFGPATSLQ (256 aa)) are reductase. The FAD-binding FR-type domain maps to 150 to 260 (KDFRNFVIVK…SAPAGDFVLN (111 aa)). FAD contacts are provided by residues tyrosine 188 and 204–207 (RQYS). An NADP(+)-binding site is contributed by 273–278 (GVGITP). Position 394–397 (394–397 (FFGP)) interacts with FAD.

The protein belongs to the globin family. Two-domain flavohemoproteins subfamily. It in the C-terminal section; belongs to the flavoprotein pyridine nucleotide cytochrome reductase family. The cofactor is heme b. FAD serves as cofactor.

The catalysed reaction is 2 nitric oxide + NADPH + 2 O2 = 2 nitrate + NADP(+) + H(+). The enzyme catalyses 2 nitric oxide + NADH + 2 O2 = 2 nitrate + NAD(+) + H(+). In terms of biological role, is involved in NO detoxification in an aerobic process, termed nitric oxide dioxygenase (NOD) reaction that utilizes O(2) and NAD(P)H to convert NO to nitrate, which protects the bacterium from various noxious nitrogen compounds. Therefore, plays a central role in the inducible response to nitrosative stress. The sequence is that of Flavohemoprotein from Bacillus cereus (strain ATCC 14579 / DSM 31 / CCUG 7414 / JCM 2152 / NBRC 15305 / NCIMB 9373 / NCTC 2599 / NRRL B-3711).